Consider the following 426-residue polypeptide: Enolase (426 aa).

A phosphoenolpyruvate-binding site is contributed by Gly-41. Position 43 (Ser-43) interacts with Mg(2+). Residue Glu-165 coordinates phosphoenolpyruvate. Glu-165 and Glu-206 together coordinate (2R)-2-phosphoglycerate. Glu-206 functions as the Proton donor in the catalytic mechanism. Mg(2+) is bound by residues Asp-243, Glu-286, and Asp-313. The phosphoenolpyruvate site is built by Asp-313, Lys-338, Arg-367, Ser-368, and Lys-389. 3 residues coordinate (2R)-2-phosphoglycerate: Lys-338, Arg-367, and Ser-368. Catalysis depends on Lys-338, which acts as the Proton acceptor.

This sequence belongs to the enolase family. As to quaternary structure, homodimer. Mg(2+) is required as a cofactor.

Its subcellular location is the cytoplasm. It localises to the secreted. The protein localises to the cell surface. The catalysed reaction is (2R)-2-phosphoglycerate = phosphoenolpyruvate + H2O. Its pathway is carbohydrate degradation; glycolysis; pyruvate from D-glyceraldehyde 3-phosphate: step 4/5. Catalyzes the reversible conversion of 2-phosphoglycerate (2-PG) into phosphoenolpyruvate (PEP). It is essential for the degradation of carbohydrates via glycolysis. This chain is Enolase, found in Chloroflexus aurantiacus (strain ATCC 29366 / DSM 635 / J-10-fl).